Consider the following 85-residue polypeptide: DNA-directed RNA polymerase subunit omega (85 aa).

The protein belongs to the RNA polymerase subunit omega family. As to quaternary structure, the RNAP catalytic core consists of 2 alpha, 1 beta, 1 beta' and 1 omega subunit. When a sigma factor is associated with the core the holoenzyme is formed, which can initiate transcription.

The enzyme catalyses RNA(n) + a ribonucleoside 5'-triphosphate = RNA(n+1) + diphosphate. Functionally, promotes RNA polymerase assembly. Latches the N- and C-terminal regions of the beta' subunit thereby facilitating its interaction with the beta and alpha subunits. This Tropheryma whipplei (strain TW08/27) (Whipple's bacillus) protein is DNA-directed RNA polymerase subunit omega.